The chain runs to 434 residues: APETALA2-like protein 2 (434 aa).

Residues 1–116 form a disordered region; sequence MLLDLNVESP…KTRRGPRSRS (116 aa). Residues 12–23 are compositionally biased toward low complexity; the sequence is RSGTSSSSVLNS. Positions 25–38 are enriched in gly residues; it reads DAGGGGGGGGGGGL. Positions 72–87 are enriched in pro residues; that stretch reads LPPPPPAAPSPAPAWQ. The segment covering 104–113 has biased composition (basic residues); the sequence is VAKKTRRGPR. The Nuclear localization signal signature appears at 106–115; that stretch reads KKTRRGPRSR. DNA-binding regions (AP2/ERF) lie at residues 118-174 and 210-267; these read QYRG…INFN and KFRG…TNFE. Positions 291–295 match the EAR motif; the sequence is LDLRI.

Belongs to the AP2/ERF transcription factor family. AP2 subfamily. May form homodimer. Interacts with TPR2/ASP1.

The protein resides in the nucleus. Functionally, probable transcription factor. Involved in spikelet transition. Together with SNB, controls synergistically inflorescence architecture and floral meristem establishment via the regulation of spatio-temporal expression of B- and E-function floral organ identity genes in the lodicules and of spikelet meristem genes. Prevents lemma and palea elongation as well as grain growth. The protein is APETALA2-like protein 2 of Oryza sativa subsp. indica (Rice).